Consider the following 607-residue polypeptide: UvrABC system protein C (607 aa).

In terms of domain architecture, GIY-YIG spans 11–89 (CKPGVYRFED…IKEFAPPCNV (79 aa)). Residues 201–236 (SSLLESLKKKMLKASKNKEYEEAAILRDKIQAAQTV) enclose the UVR domain.

This sequence belongs to the UvrC family. In terms of assembly, interacts with UvrB in an incision complex.

Its subcellular location is the cytoplasm. The UvrABC repair system catalyzes the recognition and processing of DNA lesions. UvrC both incises the 5' and 3' sides of the lesion. The N-terminal half is responsible for the 3' incision and the C-terminal half is responsible for the 5' incision. This Tropheryma whipplei (strain TW08/27) (Whipple's bacillus) protein is UvrABC system protein C.